Reading from the N-terminus, the 391-residue chain is Deoxyguanosinetriphosphate triphosphohydrolase-like protein (391 aa).

Positions 62–198 constitute an HD domain; sequence RLTHSLEVST…ASLADDISYI (137 aa).

The protein belongs to the dGTPase family. Type 2 subfamily.

In Rickettsia akari (strain Hartford), this protein is Deoxyguanosinetriphosphate triphosphohydrolase-like protein.